The chain runs to 218 residues: Glutathione S-transferase A (218 aa).

Ser-1 bears the N-acetylserine mark. A GST N-terminal domain is found at 2-82 (GKPVLHYFNV…YIATKYNLYG (81 aa)). Lys-3 carries the post-translational modification N6-succinyllysine. Residues Tyr-8, Lys-44, 53-54 (QV), and 66-67 (QS) contribute to the glutathione site. Residues 84–206 (DTKERLLIDM…LQPGSQRKPF (123 aa)) enclose the GST C-terminal domain.

The protein belongs to the GST superfamily. Alpha family. In terms of assembly, homodimer or heterodimer of GSTA1 and GSTA2.

It localises to the cytoplasm. The enzyme catalyses RX + glutathione = an S-substituted glutathione + a halide anion + H(+). The catalysed reaction is prostaglandin A2 + glutathione = prostaglandin A2-S-(R)-glutathione. It catalyses the reaction prostaglandin J2 + glutathione = prostaglandin J2-S-(R)-glutathione. It carries out the reaction (13S)-hydroperoxy-(9Z,11E)-octadecadienoate + 2 glutathione = (13S)-hydroxy-(9Z,11E)-octadecadienoate + glutathione disulfide + H2O. The enzyme catalyses androst-5-ene-3,17-dione = androst-4-ene-3,17-dione. Glutathione S-transferase that catalyzes the nucleophilic attack of the sulfur atom of glutathione on the electrophilic groups of a wide range of exogenous and endogenous compounds. Involved in the formation of glutathione conjugates of both prostaglandin A2 (PGA2) and prostaglandin J2 (PGJ2). It also catalyzes the isomerization of D5-androstene-3,17-dione (AD) into D4-androstene-3,17-dione and may therefore play an important role in hormone biosynthesis. Through its glutathione-dependent peroxidase activity toward the fatty acid hydroperoxide (13S)-hydroperoxy-(9Z,11E)-octadecadienoate/13-HPODE it is also involved in the metabolism of oxidized linoleic acid. The protein is Glutathione S-transferase A of Cavia porcellus (Guinea pig).